Consider the following 325-residue polypeptide: 5-dehydro-2-deoxygluconokinase (325 aa).

It belongs to the carbohydrate kinase PfkB family.

It carries out the reaction 5-dehydro-2-deoxy-D-gluconate + ATP = 6-phospho-5-dehydro-2-deoxy-D-gluconate + ADP + H(+). It functions in the pathway polyol metabolism; myo-inositol degradation into acetyl-CoA; acetyl-CoA from myo-inositol: step 5/7. Catalyzes the phosphorylation of 5-dehydro-2-deoxy-D-gluconate (2-deoxy-5-keto-D-gluconate or DKG) to 6-phospho-5-dehydro-2-deoxy-D-gluconate (DKGP). This is 5-dehydro-2-deoxygluconokinase from Listeria innocua serovar 6a (strain ATCC BAA-680 / CLIP 11262).